Here is a 397-residue protein sequence, read N- to C-terminus: DNA replication and repair protein RecF (397 aa).

30 to 37 is a binding site for ATP; sequence GPNGQGKT.

The protein belongs to the RecF family.

The protein localises to the cytoplasm. The RecF protein is involved in DNA metabolism; it is required for DNA replication and normal SOS inducibility. RecF binds preferentially to single-stranded, linear DNA. It also seems to bind ATP. The polypeptide is DNA replication and repair protein RecF (Beutenbergia cavernae (strain ATCC BAA-8 / DSM 12333 / CCUG 43141 / JCM 11478 / NBRC 16432 / NCIMB 13614 / HKI 0122)).